The following is a 79-amino-acid chain: CDC42 small effector protein 1 (79 aa).

Residues C10 and C11 are each lipidated (S-palmitoyl cysteine). The CRIB domain occupies 30–43 (IGEPMNFVHLTHIG). Residues 41–79 (HIGSGDMGASDGLPRAGGVQEQMRSKCGRDRQWSNSGVL) are disordered. Residues 63–72 (MRSKCGRDRQ) are compositionally biased toward basic and acidic residues.

It belongs to the CDC42SE/SPEC family.

Its subcellular location is the cytoplasm. It localises to the cytoskeleton. The protein localises to the cell membrane. In terms of biological role, probably involved in the organization of the actin cytoskeleton by acting downstream of CDC42, inducing actin filament assembly. The protein is CDC42 small effector protein 1 (cdc42se1) of Xenopus tropicalis (Western clawed frog).